The chain runs to 961 residues: Outer capsid protein VP2 (961 aa).

It belongs to the orbivirus VP2 family.

It is found in the virion. In terms of biological role, the VP2 protein is one of the two proteins (with VP5) which constitute the virus particle outer capsid. It is the major target of the host immunogenic response. Responsible for viral attachment to target host cell, probably by binding to sialic acid. This attachment induces virion internalization predominantly through clathrin-dependent endocytosis. The protein is Outer capsid protein VP2 (Segment-2) of Antilocapra americana (Pronghorn).